Reading from the N-terminus, the 424-residue chain is Serine--tRNA ligase (424 aa).

An L-serine-binding site is contributed by 229–231 (TAE). 260-262 (RRE) is an ATP binding site. Residue E283 participates in L-serine binding. 347–350 (EVSS) contributes to the ATP binding site. S383 is an L-serine binding site.

The protein belongs to the class-II aminoacyl-tRNA synthetase family. Type-1 seryl-tRNA synthetase subfamily. Homodimer. The tRNA molecule binds across the dimer.

The protein localises to the cytoplasm. The enzyme catalyses tRNA(Ser) + L-serine + ATP = L-seryl-tRNA(Ser) + AMP + diphosphate + H(+). The catalysed reaction is tRNA(Sec) + L-serine + ATP = L-seryl-tRNA(Sec) + AMP + diphosphate + H(+). It participates in aminoacyl-tRNA biosynthesis; selenocysteinyl-tRNA(Sec) biosynthesis; L-seryl-tRNA(Sec) from L-serine and tRNA(Sec): step 1/1. In terms of biological role, catalyzes the attachment of serine to tRNA(Ser). Is also able to aminoacylate tRNA(Sec) with serine, to form the misacylated tRNA L-seryl-tRNA(Sec), which will be further converted into selenocysteinyl-tRNA(Sec). This chain is Serine--tRNA ligase, found in Roseiflexus castenholzii (strain DSM 13941 / HLO8).